The sequence spans 148 residues: 3-dehydroquinate dehydratase (148 aa).

Residue Tyr-24 is the Proton acceptor of the active site. 3 residues coordinate substrate: Asn-75, His-81, and Asp-88. The Proton donor role is filled by His-101. Substrate is bound by residues 102-103 (LS) and Arg-112.

The protein belongs to the type-II 3-dehydroquinase family. Homododecamer.

It catalyses the reaction 3-dehydroquinate = 3-dehydroshikimate + H2O. It participates in metabolic intermediate biosynthesis; chorismate biosynthesis; chorismate from D-erythrose 4-phosphate and phosphoenolpyruvate: step 3/7. In terms of biological role, catalyzes a trans-dehydration via an enolate intermediate. The polypeptide is 3-dehydroquinate dehydratase (Sinorhizobium medicae (strain WSM419) (Ensifer medicae)).